Reading from the N-terminus, the 229-residue chain is UPF0228 protein MA_3119 (229 aa).

Positions 35–66 (STPVNTSTPVNTSTPVNTSTPVNTSTPVSTST) are enriched in low complexity. Positions 35-67 (STPVNTSTPVNTSTPVNTSTPVNTSTPVSTSTI) are disordered.

Belongs to the UPF0228 family.

This Methanosarcina acetivorans (strain ATCC 35395 / DSM 2834 / JCM 12185 / C2A) protein is UPF0228 protein MA_3119.